The primary structure comprises 239 residues: Ditrans,polycis-undecaprenyl-diphosphate synthase ((2E,6E)-farnesyl-diphosphate specific) (239 aa).

Residue Asp18 is part of the active site. Asp18 provides a ligand contact to Mg(2+). Residues Gly19–Arg22, Trp23, Arg31, His35, and Ser63–Glu65 each bind substrate. Asn66 functions as the Proton acceptor in the catalytic mechanism. Substrate-binding positions include Trp67, Arg69, Arg186, and Arg192–Ser194. Glu205 lines the Mg(2+) pocket.

This sequence belongs to the UPP synthase family. In terms of assembly, homodimer. The cofactor is Mg(2+).

The catalysed reaction is 8 isopentenyl diphosphate + (2E,6E)-farnesyl diphosphate = di-trans,octa-cis-undecaprenyl diphosphate + 8 diphosphate. In terms of biological role, catalyzes the sequential condensation of isopentenyl diphosphate (IPP) with (2E,6E)-farnesyl diphosphate (E,E-FPP) to yield (2Z,6Z,10Z,14Z,18Z,22Z,26Z,30Z,34E,38E)-undecaprenyl diphosphate (di-trans,octa-cis-UPP). UPP is the precursor of glycosyl carrier lipid in the biosynthesis of bacterial cell wall polysaccharide components such as peptidoglycan and lipopolysaccharide. In Haemophilus influenzae (strain ATCC 51907 / DSM 11121 / KW20 / Rd), this protein is Ditrans,polycis-undecaprenyl-diphosphate synthase ((2E,6E)-farnesyl-diphosphate specific).